Here is a 167-residue protein sequence, read N- to C-terminus: Disulfide bond formation protein B (167 aa).

The Cytoplasmic portion of the chain corresponds to 1 to 12; sequence MFLNLLDAPRRL. The helical transmembrane segment at 13–29 threads the bilayer; the sequence is LALVALGCVALLAFGLY. Residues 30–47 are Periplasmic-facing; the sequence is LQHVVGLEPCPMCIVQRY. Cysteine 39 and cysteine 42 are joined by a disulfide. The helical transmembrane segment at 48–63 threads the bilayer; sequence ALVLVAIVAGLTAITS. The Cytoplasmic portion of the chain corresponds to 64–69; the sequence is NKKGLI. Residues 70–87 traverse the membrane as a helical segment; the sequence is TGSGVLLLLAGFGAFVAA. Residues 88–143 are Periplasmic-facing; that stretch reads RQSFLQWYPPEVASCGRDFYGMIETFPLQRAIPMIFKGSGDCAKVDWTFLGGSIAN. Cysteine 102 and cysteine 129 are oxidised to a cystine. A helical transmembrane segment spans residues 144 to 162; sequence WSFVCFAVIGLTALTLIAR. Residues 163 to 167 are Cytoplasmic-facing; sequence LARQR.

It belongs to the DsbB family.

The protein resides in the cell inner membrane. In terms of biological role, required for disulfide bond formation in some periplasmic proteins. Acts by oxidizing the DsbA protein. This is Disulfide bond formation protein B from Polaromonas naphthalenivorans (strain CJ2).